We begin with the raw amino-acid sequence, 566 residues long: Sodium-dependent high-affinity dicarboxylate transporter 3 (566 aa).

Helical transmembrane passes span 55–75, 92–112, 123–139, 162–182, 219–239, 268–288, 329–349, 352–372, 400–420, 439–459, 496–516, and 521–541; these read LVLVLTPLFFGQMLNWEGPEW, VMPLAVTAMLPVVLFPLVGVL, NDTNFLFIGGLIMAAAV, WIMLGFMTVTALLSSFISNTA, MATGLVLSICFAANIGGTGTA, WIFFAYPLMLLCLFVAWMTLV, ILLSLWVFRNPGVVPGFGVFF, GAYTDATSAMIVAFLLFVLPS, ETFPWSVVLLLGGGFALAAGV, LPLWILQLLTMLIAMVITNIC, FAFIFPVGTPPNAIVFGSGMV, and MAFVGGIISLELLVLTVLYMN.

It belongs to the SLC13A/DASS transporter (TC 2.A.47) family. NADC subfamily. Nad-1 and nad-2 are coexpressed in the intestinal tract from early larvae to adults, expression is from the pharynx through to the anus. Expression level is significantly greater in the anterior half of the intestine than in the posterior half.

It is found in the membrane. High-affinity sodium-dicarboxylate cotransporter that accepts a range of tricarboxylic acid-cycle intermediates with 4-5 carbon atoms. There is no interaction with monocarboxylates. Plays a role in the regulation of life span. In Caenorhabditis elegans, this protein is Sodium-dependent high-affinity dicarboxylate transporter 3 (nac-3).